A 638-amino-acid polypeptide reads, in one-letter code: Threonine--tRNA ligase (638 aa).

One can recognise a TGS domain in the interval 1–61 (MPVVTLPDGS…EADAEVALVT (61 aa)). The tract at residues 242–533 (DHRKLGKALD…LTEHYAGQYP (292 aa)) is catalytic. Zn(2+)-binding residues include Cys333, His384, and His510.

Belongs to the class-II aminoacyl-tRNA synthetase family. Homodimer. Zn(2+) serves as cofactor.

Its subcellular location is the cytoplasm. It catalyses the reaction tRNA(Thr) + L-threonine + ATP = L-threonyl-tRNA(Thr) + AMP + diphosphate + H(+). Functionally, catalyzes the attachment of threonine to tRNA(Thr) in a two-step reaction: L-threonine is first activated by ATP to form Thr-AMP and then transferred to the acceptor end of tRNA(Thr). Also edits incorrectly charged L-seryl-tRNA(Thr). The chain is Threonine--tRNA ligase from Methylococcus capsulatus (strain ATCC 33009 / NCIMB 11132 / Bath).